The following is an 82-amino-acid chain: Sec-independent protein translocase protein TatA (82 aa).

A helical transmembrane segment spans residues 1 to 21 (MGIFDWKHWIVILIVVVLVFG). A disordered region spans residues 43–82 (VNTEEDDKKDQPAAQPAQPLNQPHTIDAQAQKVEEPARKD).

Belongs to the TatA/E family. In terms of assembly, the Tat system comprises two distinct complexes: a TatABC complex, containing multiple copies of TatA, TatB and TatC subunits, and a separate TatA complex, containing only TatA subunits. Substrates initially bind to the TatABC complex, which probably triggers association of the separate TatA complex to form the active translocon.

Its subcellular location is the cell inner membrane. Functionally, part of the twin-arginine translocation (Tat) system that transports large folded proteins containing a characteristic twin-arginine motif in their signal peptide across membranes. TatA could form the protein-conducting channel of the Tat system. The polypeptide is Sec-independent protein translocase protein TatA (Pseudomonas aeruginosa (strain LESB58)).